The primary structure comprises 114 residues: Flagellar hook-basal body complex protein FliE (114 aa).

Belongs to the FliE family.

The protein localises to the bacterial flagellum basal body. The protein is Flagellar hook-basal body complex protein FliE of Desulfitobacterium hafniense (strain DSM 10664 / DCB-2).